Reading from the N-terminus, the 904-residue chain is MFARLAFGAWPGSPQVAISVRMAQTAKKDMAPPASAPTPMMAQYLALKAAAEDCLLFYRMGDFFELFFDDAKTASACLDIALTARGEHDGQPIPMCGVPAHSAEGYLARLIKAGHRVAIADQTESPAEAKKRAGSKALVGRAIVRVVTAGTLTEEALLDSRAANWLVAVAGAGQGADRRIGIAAADISTGRFEIAGLIPSALDAELARLDAAEIVVPEDFEEPPAGAVAWPREHFESVRGEERLKRLLGVATLDGFGAFTRAELAAAGALIAYLERAGQGSLPFLQPPRRRVVADHMMIDAATRESLEITLSQAGVRKGSLLDAVDRTVTGAGARLLGADLSAPLTDVGAIEARLDLVALFEGDGALRERLRGALRALPDVGRALGRLVARRGSPRDLGQLRDGLDQARLLHELLGRAAPMPALLAGLLPQLVGHDELVDLLRRALVATPPIDAAQGGYIAEGYDPALDALRGQGGEGRKAIAALEARYRAETGIPSLKIKHNGVLGYHIEVQAKHADPLMTADSGFTHRQTLAGVVRFNAPDLHEQAMRVGQSGEHALAAEAAHLEELMAAALGRTAEIAATADALARLDVAAALAERAAEGGWTRPHFEPHSCFDVIGGRHPVVEAAVAAQGARFVANDCRLSDQERLWLVTGPNMGGKSTFLRQNAAIAILAQAGSPVPATSARLGIVDRLFSRVGASDNLARGRSTFMVEMVETAAILAQATERSFVILDEVGRGTSTYDGLAIAWAVVEAVHDINRCRCLFATHYHELTRLAERLDALSLHHVRAREWKGELVLLHELADGPADRSYGIAVAKLAGLSPPVLARARDVLKKLEAGRAATGGLAAGLDDLPLFAAAAQVEEAAPDPLRHEIETIDVDSLSPREALDILYRLKTLAREAAE.

ATP is bound at residue 655–662; that stretch reads GPNMGGKS.

This sequence belongs to the DNA mismatch repair MutS family.

In terms of biological role, this protein is involved in the repair of mismatches in DNA. It is possible that it carries out the mismatch recognition step. This protein has a weak ATPase activity. In Rhizorhabdus wittichii (strain DSM 6014 / CCUG 31198 / JCM 15750 / NBRC 105917 / EY 4224 / RW1) (Sphingomonas wittichii), this protein is DNA mismatch repair protein MutS.